Consider the following 1641-residue polypeptide: Alpha-2-macroglobulin (1641 aa).

The N-terminal stretch at Met-1 to Gly-31 is a signal peptide. Cys-32 is lipidated: N-palmitoyl cysteine. Cys-32 carries S-diacylglycerol cysteine lipidation. The segment at residues Cys-1166–Gln-1169 is a cross-link (isoglutamyl cysteine thioester (Cys-Gln)).

This sequence belongs to the protease inhibitor I39 (alpha-2-macroglobulin) family. Bacterial alpha-2-macroglobulin subfamily.

The protein resides in the cell membrane. Functionally, protects the bacterial cell from host peptidases. This chain is Alpha-2-macroglobulin, found in Xylella fastidiosa (strain 9a5c).